Here is a 926-residue protein sequence, read N- to C-terminus: MMNSNEIRQSFLDFFKERGHTILPSASLVPESPNLLFTNAGMNPFVPFFLGKQKCPYVPPRIADSQKCLRAGGKHNDLEEVGYDTYHHTFFEMLGNWSFNDYFKEEAIHWAWELLTQKWGFPKERIYATVYKPAPDEPGEFDEEAFRIWFKLFQKAKLNPLLHIHFGTKKDNFWMMGETGPCGPCSEIHIDLTPDGQSEGKLINKNSPLCIEIWNLVFIQLNANEDGSFSLLPSRHVDTGMGLERVCAIIQGTSSFRQFNRTISDYDTDLFIPLIEKLQDISKVSYTGSIPPTPDFALDPQLKKDIAFRVIVDHVRALAFAIADGILPSNLGRGHVLRRLLRRAIRFGQILGVNPPFLFEMVDPLVKIMGSHYPELIDKQGHIEEVISSEEELFARTLSHGLALFEEIKQKMIAEKRKEISGKEAFVLYDTYGFPLDLTQLLAKEQGFSVDTQGFERLMAEQRRRSLLSHEEDIVSLTKTSQFVGYEELEAEAEVVVLLSANRAIFDRTPFYAEMGGQVGDKGYVVFDQKKIEVLDTMKSASGAHVHRLAFTDDLKPGSRVYLQVDEKRRRCIAAHHTATHLLHWALRKVLGPETLQRGSYVGPDRLRFDFSHTGPLSAEELAEIERLVNEKIELNDPVTAEEESYEKVKNNPDILQLFGEKYGQRVRIVSVGRYSKELCGGTHVRSTGEIGYFKILGEYGVSAGIRRIEAACGKALEQFLHAQAAEQDKKWQILHSKDPSLPRLSKWVDTLDLDSLIEIFQRRNEELSSFEKEIKEREKLRAKKQEENFRREASQQAMAAIAQVEKIGAIPVLFLDCDAKPQSYLPLLWNEISKRIDSVAILASRSEGKINLFIGVGPSLTTKIEARNLLSQLVASFEGKGGGSKTIAQGGLKDSIEISSLFEKGRGILEQYGGQKGQTEPKATG.

Residues His577, His581, Cys680, and His684 each coordinate Zn(2+).

It belongs to the class-II aminoacyl-tRNA synthetase family. Requires Zn(2+) as cofactor.

The protein resides in the cytoplasm. It carries out the reaction tRNA(Ala) + L-alanine + ATP = L-alanyl-tRNA(Ala) + AMP + diphosphate. Functionally, catalyzes the attachment of alanine to tRNA(Ala) in a two-step reaction: alanine is first activated by ATP to form Ala-AMP and then transferred to the acceptor end of tRNA(Ala). Also edits incorrectly charged Ser-tRNA(Ala) and Gly-tRNA(Ala) via its editing domain. The sequence is that of Alanine--tRNA ligase from Methylacidiphilum infernorum (isolate V4) (Methylokorus infernorum (strain V4)).